Reading from the N-terminus, the 196-residue chain is Carnitine operon protein CaiE (196 aa).

The interval 176 to 196 (LRQMEENRPRLQGTTDVAPKR) is disordered.

The protein belongs to the transferase hexapeptide repeat family.

It participates in amine and polyamine metabolism; carnitine metabolism. Functionally, overproduction of CaiE stimulates the activity of CaiB and CaiD. The chain is Carnitine operon protein CaiE from Escherichia fergusonii (strain ATCC 35469 / DSM 13698 / CCUG 18766 / IAM 14443 / JCM 21226 / LMG 7866 / NBRC 102419 / NCTC 12128 / CDC 0568-73).